The following is a 47-amino-acid chain: Conotoxin reg3.11 (47 aa).

The propeptide occupies 1-31 (DQPVERHAENKRHLIPAVMRAMTMNADRRVQ). 3 disulfides stabilise this stretch: cysteine 32–cysteine 44, cysteine 33–cysteine 42, and cysteine 38–cysteine 45. A propeptide spanning residues 46–47 (YH) is cleaved from the precursor.

This sequence belongs to the conotoxin M superfamily. As to expression, expressed by the venom duct.

It localises to the secreted. This chain is Conotoxin reg3.11, found in Conus regius (Crown cone).